Reading from the N-terminus, the 337-residue chain is tRNA N6-adenosine threonylcarbamoyltransferase (337 aa).

Fe cation is bound by residues histidine 111 and histidine 115. Residues 134–138 (LVSGG), aspartate 167, glycine 180, and asparagine 272 each bind substrate. Aspartate 300 is a binding site for Fe cation.

Belongs to the KAE1 / TsaD family. Requires Fe(2+) as cofactor.

Its subcellular location is the cytoplasm. The catalysed reaction is L-threonylcarbamoyladenylate + adenosine(37) in tRNA = N(6)-L-threonylcarbamoyladenosine(37) in tRNA + AMP + H(+). Required for the formation of a threonylcarbamoyl group on adenosine at position 37 (t(6)A37) in tRNAs that read codons beginning with adenine. Is involved in the transfer of the threonylcarbamoyl moiety of threonylcarbamoyl-AMP (TC-AMP) to the N6 group of A37, together with TsaE and TsaB. TsaD likely plays a direct catalytic role in this reaction. This Shewanella loihica (strain ATCC BAA-1088 / PV-4) protein is tRNA N6-adenosine threonylcarbamoyltransferase.